Reading from the N-terminus, the 170-residue chain is Protein-export protein SecB (170 aa).

Belongs to the SecB family. As to quaternary structure, homotetramer, a dimer of dimers. One homotetramer interacts with 1 SecA dimer.

The protein localises to the cytoplasm. Functionally, one of the proteins required for the normal export of preproteins out of the cell cytoplasm. It is a molecular chaperone that binds to a subset of precursor proteins, maintaining them in a translocation-competent state. It also specifically binds to its receptor SecA. This Pasteurella multocida (strain Pm70) protein is Protein-export protein SecB.